We begin with the raw amino-acid sequence, 1165 residues long: Integrin alpha-L (1165 aa).

An N-terminal signal peptide occupies residues 1-23 (MNSCIIVLRLLLSGPFVFAPAWS). The Extracellular portion of the chain corresponds to 24 to 1084 (YNLDVRHVQN…MKVDLVYEKE (1061 aa)). FG-GAP repeat units lie at residues 29–80 (RHVQ…DCLP) and 81–138 (VTLS…GPVL). An N-linked (GlcNAc...) asparagine glycan is attached at Asn-33. The cysteines at positions 71 and 78 are disulfide-linked. A glycan (N-linked (GlcNAc...) asparagine) is linked at Asn-86. Cys-108 and Cys-126 are oxidised to a cystine. The region spanning 153–324 (DLVFLFDGSM…EKLKDLFTEL (172 aa)) is the VWFA domain. N-linked (GlcNAc...) asparagine glycosylation is present at Asn-185. FG-GAP repeat units lie at residues 335–386 (SKQD…SSTF), 387–442 (VGNE…GGPW), 443–503 (SQIQ…EFQM), 504–560 (VSEL…GLSP), and 564–624 (QRIE…FSPA). Asp-465, Asp-467, Asp-469, Glu-473, Asp-527, Asn-529, Asp-531, Asp-535, Asp-587, Asp-591, and Asp-595 together coordinate Ca(2+). Asn-646, Asn-667, and Asn-723 each carry an N-linked (GlcNAc...) asparagine glycan. Cysteines 650 and 704 form a disulfide. 2 cysteine pairs are disulfide-bonded: Cys-768/Cys-774 and Cys-842/Cys-858. 3 N-linked (GlcNAc...) asparagine glycosylation sites follow: Asn-859, Asn-894, and Asn-929. 2 cysteine pairs are disulfide-bonded: Cys-994/Cys-1009 and Cys-1017/Cys-1048. Residues Asn-1056 and Asn-1067 are each glycosylated (N-linked (GlcNAc...) asparagine). A helical membrane pass occupies residues 1085 to 1105 (MLYLYVLSGIGGLLLLFLIFI). At 1106–1165 (ALYKVGFFKRNLKEKMEANVDASSEIPGEDAGQPELEKECKDPGCLEPLQKTDEDGSGGD) the chain is on the cytoplasmic side. The short motif at 1111–1115 (GFFKR) is the GFFKR motif element. The interval 1123–1165 (ANVDASSEIPGEDAGQPELEKECKDPGCLEPLQKTDEDGSGGD) is disordered. Positions 1140-1159 (ELEKECKDPGCLEPLQKTDE) are enriched in basic and acidic residues.

It belongs to the integrin alpha chain family. As to quaternary structure, heterodimer of an alpha and a beta subunit. The ITGAL alpha subunit associates with the ITGB2 beta subunit. Interacts with THBD. Interacts with CD226. Post-translationally, in resting T-cells, up to 40% of surface ITGAL is constitutively phosphorylated. Phosphorylation causes conformational changes needed for ligand binding and is necessary for the activation by some physiological agents.

It is found in the cell membrane. Its function is as follows. Integrin ITGAL/ITGB2 is a receptor for ICAM1, ICAM2, ICAM3 and ICAM4. Integrin ITGAL/ITGB2 is a receptor for F11R. Integrin ITGAL/ITGB2 is a receptor for the secreted form of ubiquitin-like protein ISG15; the interaction is mediated by ITGAL. Involved in a variety of immune phenomena including leukocyte-endothelial cell interaction, cytotoxic T-cell mediated killing, and antibody dependent killing by granulocytes and monocytes. Contributes to natural killer cell cytotoxicity. Involved in leukocyte adhesion and transmigration of leukocytes including T-cells and neutrophils. Acts as a platform at the immunological synapse to translate TCR engagement and density of the ITGAL ligand ICAM1 into graded adhesion. Required for generation of common lymphoid progenitor cells in bone marrow, indicating the role in lymphopoiesis. Integrin ITGAL/ITGB2 in association with ICAM3, contributes to apoptotic neutrophil phagocytosis by macrophages. The polypeptide is Integrin alpha-L (Bos taurus (Bovine)).